We begin with the raw amino-acid sequence, 333 residues long: Chitinase-like protein 2 (333 aa).

The N-terminal stretch at 1-27 (MVSKPLFSLLLLTVALVVFQTGTLVNA) is a signal peptide. Cysteine 50 and cysteine 56 are oxidised to a cystine. N-linked (GlcNAc...) asparagine glycosylation is present at asparagine 65. A disulfide bond links cysteine 165 and cysteine 175. Residues asparagine 216 and asparagine 252 are each glycosylated (N-linked (GlcNAc...) asparagine). Cysteine 275 and cysteine 313 are disulfide-bonded. The tract at residues 307–333 (PHEKLSCADQEPFSSSSSAPPSSGSSS) is disordered. A compositionally biased stretch (low complexity) spans 320–333 (SSSSSAPPSSGSSS).

Belongs to the glycosyl hydrolase 19 family. Mostly expressed in stems, especially in xylem and interfascicular fibers.

It is found in the secreted. Its function is as follows. No chitinase activity. Required for proper cell wall biosynthesis in etiolated seedlings. Prevents lignin accumulation in hypocotyls. The polypeptide is Chitinase-like protein 2 (CTL2) (Arabidopsis thaliana (Mouse-ear cress)).